The chain runs to 268 residues: Type-5 uracil-DNA glycosylase (268 aa).

The interval 1 to 29 (MHPKTGRAFRSPVEPGSGWPGDPATPQTP) is disordered. Residues cysteine 57, cysteine 60, cysteine 161, and cysteine 176 each contribute to the [4Fe-4S] cluster site.

The protein belongs to the uracil-DNA glycosylase (UDG) superfamily. Type 5 (UDGb) family.

DNA glycosylase with broad substrate specificity. This chain is Type-5 uracil-DNA glycosylase, found in Mycobacterium bovis (strain ATCC BAA-935 / AF2122/97).